The chain runs to 253 residues: Bridging integrator 3 (253 aa).

The 224-residue stretch at 9–232 (GQPKKQIVPK…LDQPGHSDEQ (224 aa)) folds into the BAR domain. Coiled coils occupy residues 18-51 (KTVERDFEREYGKLQQLEEQTRRLQKDMKKSTDA), 120-152 (SLNMAVKRREQALQDYRRLQAKVEKYEEKEKTG), and 231-247 (EQRERENEAKLSELRAL). The segment at 220 to 240 (SHQLDQPGHSDEQRERENEAK) is disordered. The span at 227–240 (GHSDEQRERENEAK) shows a compositional bias: basic and acidic residues.

As to expression, ubiquitously expressed except in brain.

The protein resides in the cytoplasm. It is found in the cytoskeleton. Involved in cytokinesis and septation where it has a role in the localization of F-actin. This Homo sapiens (Human) protein is Bridging integrator 3 (BIN3).